Reading from the N-terminus, the 291-residue chain is Phosphatidylserine decarboxylase proenzyme 2 (291 aa).

Catalysis depends on charge relay system; for autoendoproteolytic cleavage activity residues Asp-112 and Ser-251. Ser-251 serves as the catalytic Schiff-base intermediate with substrate; via pyruvic acid; for decarboxylase activity. Ser-251 carries the pyruvic acid (Ser); by autocatalysis modification.

It belongs to the phosphatidylserine decarboxylase family. PSD-B subfamily. Prokaryotic type II sub-subfamily. In terms of assembly, heterodimer of a large membrane-associated beta subunit and a small pyruvoyl-containing alpha subunit. Pyruvate serves as cofactor. Post-translationally, is synthesized initially as an inactive proenzyme. Formation of the active enzyme involves a self-maturation process in which the active site pyruvoyl group is generated from an internal serine residue via an autocatalytic post-translational modification. Two non-identical subunits are generated from the proenzyme in this reaction, and the pyruvate is formed at the N-terminus of the alpha chain, which is derived from the carboxyl end of the proenzyme. The autoendoproteolytic cleavage occurs by a canonical serine protease mechanism, in which the side chain hydroxyl group of the serine supplies its oxygen atom to form the C-terminus of the beta chain, while the remainder of the serine residue undergoes an oxidative deamination to produce ammonia and the pyruvoyl prosthetic group on the alpha chain. During this reaction, the Ser that is part of the protease active site of the proenzyme becomes the pyruvoyl prosthetic group, which constitutes an essential element of the active site of the mature decarboxylase.

It localises to the cell membrane. It carries out the reaction a 1,2-diacyl-sn-glycero-3-phospho-L-serine + H(+) = a 1,2-diacyl-sn-glycero-3-phosphoethanolamine + CO2. Its pathway is phospholipid metabolism; phosphatidylethanolamine biosynthesis; phosphatidylethanolamine from CDP-diacylglycerol: step 2/2. Catalyzes the formation of phosphatidylethanolamine (PtdEtn) from phosphatidylserine (PtdSer). The sequence is that of Phosphatidylserine decarboxylase proenzyme 2 from Clostridium acetobutylicum (strain ATCC 824 / DSM 792 / JCM 1419 / IAM 19013 / LMG 5710 / NBRC 13948 / NRRL B-527 / VKM B-1787 / 2291 / W).